The following is a 400-amino-acid chain: Putative C-type lectin domain family 20 member A (400 aa).

The first 20 residues, 1-20 (MLPRALLLSFCAAALQLVSS), serve as a signal peptide directing secretion. 2 consecutive C-type lectin domains span residues 26–131 (LVKE…FLCY) and 159–275 (ISGQ…FFCF). Disulfide bonds link Cys40-Cys130, Cys105-Cys122, Cys180-Cys274, and Cys248-Cys266. The tract at residues 287-346 (ELPPLFHTSPTEMTEETTPRPGRAVASVGSGTDRRDTAAATEAQHLSSESKEKTSAQKSG) is disordered.

In Homo sapiens (Human), this protein is Putative C-type lectin domain family 20 member A.